The chain runs to 657 residues: 2',3'-cyclic-nucleotide 2'-phosphodiesterase/3'-nucleotidase (657 aa).

Positions Met-1–Ala-26 are cleaved as a signal peptide. Residues Asp-41, His-43, Asp-86, Asn-126, His-235, His-267, and His-269 each contribute to the a divalent metal cation site. Substrate-binding positions include Tyr-450 and Tyr-554–Asn-559.

Belongs to the 5'-nucleotidase family. A divalent metal cation serves as cofactor.

It is found in the periplasm. The enzyme catalyses a nucleoside 2',3'-cyclic phosphate + H2O = a nucleoside 3'-phosphate + H(+). It catalyses the reaction a ribonucleoside 3'-phosphate + H2O = a ribonucleoside + phosphate. Functionally, this bifunctional enzyme catalyzes two consecutive reactions during ribonucleic acid degradation. Converts a 2',3'-cyclic nucleotide to a 3'-nucleotide and then the 3'-nucleotide to the corresponding nucleoside and phosphate. This chain is 2',3'-cyclic-nucleotide 2'-phosphodiesterase/3'-nucleotidase (cpdB), found in Haemophilus influenzae (strain ATCC 51907 / DSM 11121 / KW20 / Rd).